We begin with the raw amino-acid sequence, 121 residues long: Met-lysine-1b (121 aa).

The N-terminal stretch at Met-1–Ser-22 is a signal peptide. The propeptide occupies Asp-23 to Arg-69. At Met-120 the chain carries Methionine amide.

As to expression, expressed by the venom gland.

It localises to the secreted. In terms of biological role, shows no antimicrobial activity against Gram-positive bacterium B.subtilis B-501 or Gram-negative bacterium E.coli DH5-alpha at concentrations up to 20 ug/ml. Shows no toxicity towards insect (S.carnaria) larvae. This is Met-lysine-1b from Lachesana tarabaevi (Spider).